The sequence spans 581 residues: Proline--tRNA ligase (581 aa).

The protein belongs to the class-II aminoacyl-tRNA synthetase family. ProS type 1 subfamily. As to quaternary structure, homodimer.

The protein localises to the cytoplasm. The enzyme catalyses tRNA(Pro) + L-proline + ATP = L-prolyl-tRNA(Pro) + AMP + diphosphate. Its function is as follows. Catalyzes the attachment of proline to tRNA(Pro) in a two-step reaction: proline is first activated by ATP to form Pro-AMP and then transferred to the acceptor end of tRNA(Pro). As ProRS can inadvertently accommodate and process non-cognate amino acids such as alanine and cysteine, to avoid such errors it has two additional distinct editing activities against alanine. One activity is designated as 'pretransfer' editing and involves the tRNA(Pro)-independent hydrolysis of activated Ala-AMP. The other activity is designated 'posttransfer' editing and involves deacylation of mischarged Ala-tRNA(Pro). The misacylated Cys-tRNA(Pro) is not edited by ProRS. The polypeptide is Proline--tRNA ligase (Rhodococcus opacus (strain B4)).